Here is a 471-residue protein sequence, read N- to C-terminus: 3-isopropylmalate dehydratase large subunit (471 aa).

3 residues coordinate [4Fe-4S] cluster: cysteine 347, cysteine 407, and cysteine 410.

The protein belongs to the aconitase/IPM isomerase family. LeuC type 1 subfamily. In terms of assembly, heterodimer of LeuC and LeuD. [4Fe-4S] cluster is required as a cofactor.

It catalyses the reaction (2R,3S)-3-isopropylmalate = (2S)-2-isopropylmalate. It participates in amino-acid biosynthesis; L-leucine biosynthesis; L-leucine from 3-methyl-2-oxobutanoate: step 2/4. In terms of biological role, catalyzes the isomerization between 2-isopropylmalate and 3-isopropylmalate, via the formation of 2-isopropylmaleate. The chain is 3-isopropylmalate dehydratase large subunit from Buchnera aphidicola subsp. Acyrthosiphon pisum (strain APS) (Acyrthosiphon pisum symbiotic bacterium).